Consider the following 152-residue polypeptide: Large ribosomal subunit protein uL30 (152 aa).

This sequence belongs to the universal ribosomal protein uL30 family. As to quaternary structure, part of the 50S ribosomal subunit.

The polypeptide is Large ribosomal subunit protein uL30 (Methanobrevibacter smithii (strain ATCC 35061 / DSM 861 / OCM 144 / PS)).